The sequence spans 356 residues: MGGAVSAGEDNDDLIDNLKEAQYIRTERVEQAFRAIDRGDYYLEGYRDNAYKDLAWKHGNIHLSAPCIYSEVMEALKLQPGLSFLNLGSGTGYLSTMVGLILGPFGINHGIELHSDVVEYAKEKLESFIKNSDSFDKFEFCEPAFVVGNCLQIASDSHQYDRIYCGAGVQKDHENYMKILLKVGGILVMPIEDQLTQIMRTGQNTWESKNILAVSFAPLVQPSKNDNGKPDSVGLPPCAVRNLQDLARIYIRRTLRNFINDEMQAKGIPQRAPPKRKRKRVKQRINTYVFVGNQLIPQPLDSEEDEKMEEDKEEEEKEPGEALKPEEPPQNLLREKIMKLPLPESLKAYLTYFREK.

G2 is lipidated: N-myristoyl glycine. S64 is a catalytic residue. AdoMet binding motif regions lie at residues 85–94 (LNLGSGTGYL), 160–164 (YDRIY), and 181–191 (LKVGGILVMPI). The tract at residues 240–250 (VRNLQDLARIY) is BC-box. Residues 299–331 (PLDSEEDEKMEEDKEEEEKEPGEALKPEEPPQN) are disordered. Positions 301 to 318 (DSEEDEKMEEDKEEEEKE) are enriched in acidic residues. The span at 319–331 (PGEALKPEEPPQN) shows a compositional bias: basic and acidic residues. The CUL-box stretch occupies residues 340 to 343 (LPLP).

Belongs to the methyltransferase superfamily. L-isoaspartyl/D-aspartyl protein methyltransferase family. Component of the probable ECS(PCMTD1) E3 ubiquitin-protein ligase complex, at least composed of CUL5, ELOB, ELOC, RBX2 and PCMTD1. Interacts (via the BC-box) with ELOB and ELOC; the interaction is direct and stabilizes PCMTD1.

The protein localises to the cytoplasm. Its subcellular location is the membrane. Its function is as follows. Substrate recognition component of an ECS (Elongin BC-CUL5-SOCS-box protein) E3 ubiquitin ligase complex which mediates the ubiquitination and subsequent proteasomal degradation of target proteins. Specifically binds to the methyltransferase cofactor S-adenosylmethionine (AdoMet) via the N-terminal AdoMet binding motif, but does not display methyltransferase activity. May provide an alternate maintenance pathway for modified proteins by acting as a damage-specific E3 ubiquitin ligase adaptor protein. The polypeptide is Protein-L-isoaspartate O-methyltransferase domain-containing protein 1 (PCMTD1) (Bos taurus (Bovine)).